The chain runs to 239 residues: MRQSGRKSNQLRPISLELSPLINTEGSCIIKIGNTHVMCSATCETTVPPFLRGQNQGWVTAEYGMLPGSTSQRIKREAAQGKQGGRTQEIQRLIGRSMRCVMDLKKLGERQIIIDCDVINADGGTRTASITGSYVALHLAIRSLMKKRILKVNPLISQIAAVSCGIYKGEAILDLDYLEDSDAEVDSNFVFAGNGNLIEVQGTAEQEPFSEEQFIEMLKLAKCGAAELFKLQNQVLLGT.

Phosphate-binding positions include R86 and G124–R126.

Belongs to the RNase PH family. In terms of assembly, homohexameric ring arranged as a trimer of dimers.

The enzyme catalyses tRNA(n+1) + phosphate = tRNA(n) + a ribonucleoside 5'-diphosphate. Its function is as follows. Phosphorolytic 3'-5' exoribonuclease that plays an important role in tRNA 3'-end maturation. Removes nucleotide residues following the 3'-CCA terminus of tRNAs; can also add nucleotides to the ends of RNA molecules by using nucleoside diphosphates as substrates, but this may not be physiologically important. Probably plays a role in initiation of 16S rRNA degradation (leading to ribosome degradation) during starvation. The chain is Ribonuclease PH from Rickettsia akari (strain Hartford).